We begin with the raw amino-acid sequence, 159 residues long: MGLTTNIVGMHYRYPDHYEVEREKIREYAVAVQNEDTSYFEEDAAAELGYKGLLAPLTFICLFGYKAQSAFFKHANIAVTDQQIVQIDQVLKFVKPIVAGDKLYCDVYVDSMREAHGTQIIVTKNVVTNEVGDIVQETYTTLAGRVGEGGEEGFSDGAA.

Belongs to the UPF0336 family.

This is UPF0336 protein ML1910 from Mycobacterium leprae (strain TN).